A 351-amino-acid polypeptide reads, in one-letter code: Lipoyl synthase, mitochondrial (351 aa).

Residues Cys84, Cys89, Cys95, Cys115, Cys119, Cys122, and Ser330 each contribute to the [4Fe-4S] cluster site. The region spanning 100–319 (DKSKATATIM…QKRAMDMGFL (220 aa)) is the Radical SAM core domain.

This sequence belongs to the radical SAM superfamily. Lipoyl synthase family. The cofactor is [4Fe-4S] cluster.

It localises to the mitochondrion. The catalysed reaction is [[Fe-S] cluster scaffold protein carrying a second [4Fe-4S](2+) cluster] + N(6)-octanoyl-L-lysyl-[protein] + 2 oxidized [2Fe-2S]-[ferredoxin] + 2 S-adenosyl-L-methionine + 4 H(+) = [[Fe-S] cluster scaffold protein] + N(6)-[(R)-dihydrolipoyl]-L-lysyl-[protein] + 4 Fe(3+) + 2 hydrogen sulfide + 2 5'-deoxyadenosine + 2 L-methionine + 2 reduced [2Fe-2S]-[ferredoxin]. Its pathway is protein modification; protein lipoylation via endogenous pathway; protein N(6)-(lipoyl)lysine from octanoyl-[acyl-carrier-protein]: step 2/2. In terms of biological role, catalyzes the radical-mediated insertion of two sulfur atoms into the C-6 and C-8 positions of the octanoyl moiety bound to the lipoyl domains of lipoate-dependent enzymes, thereby converting the octanoylated domains into lipoylated derivatives. The sequence is that of Lipoyl synthase, mitochondrial from Yarrowia lipolytica (strain CLIB 122 / E 150) (Yeast).